Reading from the N-terminus, the 717-residue chain is MMENLLANCVQKNLNHFMFTNAIFLCELLLAQFPSEVNLQLLARCYLSNSQAYSAYYILKGSKTPQSRYLFAFSCFKLDLLGEAEAALLPCEDYAEEVPGGAAGHYLLGLIYRYSGRKNCSIQQFRMALSFDPLCWEAYGELCSLGAAEEASTVFGNVASQRLQKTCVEQRISFSEGATIDQITDSDKALKDTGLSQTEHIPGENQQDLKIMQQPGDIPPNTDRQLSTNGWDLNTPSPVLLQVMDALPPLLLKNMRRPAVEGSLMSVHGVRVRRRNFFSEELSAEAQEESGRRRSARIAARKKNPMSQSFGKDSHWLHLSPSESNYAPSLSSMIGKCRIQSSKEATTSGQSVSDIGSSVDDEEKSNPSESSPDRFSLISGISEVLSLLKILGDGHRHLHMYKCQEALLAYQKLSQKQYNTHWVLMQVGKAYFELQDYFNADSSFTLAHQKYPYALEGMDTYSTVLYHLKEEMRLGYLAQELISVDRLSPESWCAVGNCYSLRKDHDTALKMFQRAIQLNERFTYAHTLCGHEFAALEEFEDAERCYRKALGIDTRHYNAWYGLGMTYLRQEKFEFAQHQFQLALQINPRSSVIMCYYGIALHESKRNDEALMMMEKAVLTDAKNPLPKYYKAHILTSLGDYHKAQKVLEELKECAPQESSVHASLGKIYNQLKQYDKAVLHFGIALDLSPSPSDAVKIKAYMERLILPDELVTEENL.

Residues 198 to 208 (TEHIPGENQQD) are compositionally biased toward polar residues. Disordered regions lie at residues 198–217 (TEHIPGENQQDLKIMQQPGD), 282–315 (LSAEAQEESGRRRSARIAARKKNPMSQSFGKDSH), and 342–374 (SKEATTSGQSVSDIGSSVDDEEKSNPSESSPDR). A compositionally biased stretch (basic residues) spans 293-304 (RRSARIAARKKN). Over residues 342–356 (SKEATTSGQSVSDIG) the composition is skewed to polar residues. 7 TPR repeats span residues 421 to 454 (HWVLMQVGKAYFELQDYFNADSSFTLAHQKYPYA), 489 to 522 (PESWCAVGNCYSLRKDHDTALKMFQRAIQLNERF), 524 to 556 (YAHTLCGHEFAALEEFEDAERCYRKALGIDTRH), 557 to 590 (YNAWYGLGMTYLRQEKFEFAQHQFQLALQINPRS), 592 to 624 (VIMCYYGIALHESKRNDEALMMMEKAVLTDAKN), 625 to 658 (PLPKYYKAHILTSLGDYHKAQKVLEELKECAPQE), and 659 to 692 (SSVHASLGKIYNQLKQYDKAVLHFGIALDLSPSP).

This sequence belongs to the APC3/CDC27 family. As to quaternary structure, the APC/C is composed of at least 10 subunits. Interacts with APC2 and APC10.

It localises to the nucleus. Its pathway is protein modification; protein ubiquitination. In terms of biological role, component of the anaphase promoting complex/cyclosome (APC/C), a cell cycle-regulated E3 ubiquitin-protein ligase complex that controls progression through mitosis and the G1 phase of the cell cycle. The APC/C complex controls several key steps in the cell cycle by mediating ubiquitination and subsequent degradation of target proteins such as cyclins. The APC/C complex is required for the female gametophyte development and is involved in several aspect of development by controlling cell division and cell elongation. Involved in the control of endoreduplication. Functionally redundant with CDC27B in the control of gametophyte development. The chain is Cell division cycle protein 27 homolog A (CDC27A) from Arabidopsis thaliana (Mouse-ear cress).